Here is a 223-residue protein sequence, read N- to C-terminus: Large ribosomal subunit protein uL4 (223 aa).

The disordered stretch occupies residues 47–72; it reads GTASTKTRGEVAGGGRKPWPQKHTGR.

Belongs to the universal ribosomal protein uL4 family. Part of the 50S ribosomal subunit.

One of the primary rRNA binding proteins, this protein initially binds near the 5'-end of the 23S rRNA. It is important during the early stages of 50S assembly. It makes multiple contacts with different domains of the 23S rRNA in the assembled 50S subunit and ribosome. In terms of biological role, forms part of the polypeptide exit tunnel. This is Large ribosomal subunit protein uL4 from Fervidobacterium nodosum (strain ATCC 35602 / DSM 5306 / Rt17-B1).